Here is a 105-residue protein sequence, read N- to C-terminus: Pyruvate synthase subunit PorD (105 aa).

4Fe-4S ferredoxin-type domains follow at residues 44-73 (FKPE…LDEE) and 74-103 (GYPV…MVRE). [4Fe-4S] cluster contacts are provided by cysteine 53, cysteine 56, cysteine 59, cysteine 63, cysteine 83, cysteine 86, cysteine 89, and cysteine 93.

Heterotetramer of one alpha, one beta, one delta and one gamma chain. The cofactor is [4Fe-4S] cluster.

The polypeptide is Pyruvate synthase subunit PorD (porD) (Pyrococcus horikoshii (strain ATCC 700860 / DSM 12428 / JCM 9974 / NBRC 100139 / OT-3)).